We begin with the raw amino-acid sequence, 572 residues long: Phosphoenolpyruvate-protein phosphotransferase (572 aa).

The active-site Tele-phosphohistidine intermediate is His-191. Arg-298 and Arg-334 together coordinate phosphoenolpyruvate. 2 residues coordinate Mg(2+): Glu-433 and Asp-457. Residues Asn-456 to Asp-457 and Arg-467 each bind phosphoenolpyruvate. The active-site Proton donor is Cys-504.

This sequence belongs to the PEP-utilizing enzyme family. As to quaternary structure, homodimer. Mg(2+) serves as cofactor.

It is found in the cytoplasm. It catalyses the reaction L-histidyl-[protein] + phosphoenolpyruvate = N(pros)-phospho-L-histidyl-[protein] + pyruvate. General (non sugar-specific) component of the phosphoenolpyruvate-dependent sugar phosphotransferase system (sugar PTS). This major carbohydrate active-transport system catalyzes the phosphorylation of incoming sugar substrates concomitantly with their translocation across the cell membrane. Enzyme I transfers the phosphoryl group from phosphoenolpyruvate (PEP) to the phosphoryl carrier protein (HPr). The sequence is that of Phosphoenolpyruvate-protein phosphotransferase (ptsI) from Staphylococcus aureus (strain Mu50 / ATCC 700699).